The chain runs to 274 residues: Shikimate dehydrogenase (NADP(+)) (274 aa).

Shikimate contacts are provided by residues S20–S22 and T68. The active-site Proton acceptor is the K72. D84 provides a ligand contact to NADP(+). N93 and D109 together coordinate shikimate. NADP(+) contacts are provided by residues G131–A135 and L217. Y219 provides a ligand contact to shikimate. Position 240 (G240) interacts with NADP(+).

It belongs to the shikimate dehydrogenase family. Homodimer.

The enzyme catalyses shikimate + NADP(+) = 3-dehydroshikimate + NADPH + H(+). It participates in metabolic intermediate biosynthesis; chorismate biosynthesis; chorismate from D-erythrose 4-phosphate and phosphoenolpyruvate: step 4/7. Its function is as follows. Involved in the biosynthesis of the chorismate, which leads to the biosynthesis of aromatic amino acids. Catalyzes the reversible NADPH linked reduction of 3-dehydroshikimate (DHSA) to yield shikimate (SA). The sequence is that of Shikimate dehydrogenase (NADP(+)) from Sphingopyxis alaskensis (strain DSM 13593 / LMG 18877 / RB2256) (Sphingomonas alaskensis).